The following is a 256-amino-acid chain: Chemotaxis protein methyltransferase (256 aa).

One can recognise a CheR-type methyltransferase domain in the interval 1 to 256 (MDTYSVFTTK…PADTFFYQKR (256 aa)). S-adenosyl-L-methionine is bound by residues Asn-67, Ser-69, Arg-73, Glu-107, Asp-130, 185-186 (NL), and 201-202 (RN).

In terms of assembly, monomer.

The enzyme catalyses L-glutamyl-[protein] + S-adenosyl-L-methionine = [protein]-L-glutamate 5-O-methyl ester + S-adenosyl-L-homocysteine. Functionally, methylation of the membrane-bound methyl-accepting chemotaxis proteins (MCP) to form gamma-glutamyl methyl ester residues in MCP. CheR is responsible for the chemotactic adaptation to repellents. The protein is Chemotaxis protein methyltransferase (cheR) of Bacillus subtilis (strain 168).